The following is a 751-amino-acid chain: Semaphorin-3C (751 aa).

Residues 1-21 (MAFQAVCILVGVFVCSTYVKG) form the signal peptide. Positions 28 to 511 (RVYLTFDELR…SNEGLAQVSL (484 aa)) constitute a Sema domain. A glycan (N-linked (GlcNAc...) asparagine) is linked at asparagine 81. Cysteine 101 and cysteine 112 are oxidised to a cystine. N-linked (GlcNAc...) asparagine glycosylation occurs at asparagine 123. 3 disulfides stabilise this stretch: cysteine 130–cysteine 139, cysteine 266–cysteine 378, and cysteine 290–cysteine 338. N-linked (GlcNAc...) asparagine glycosylation occurs at asparagine 268. Asparagine 465 carries N-linked (GlcNAc...) asparagine glycosylation. A disulfide bridge connects residues cysteine 514 and cysteine 532. The 85-residue stretch at 571 to 655 (AYRNAAEIVQ…TENSFKQTIA (85 aa)) folds into the Ig-like C2-type domain. N-linked (GlcNAc...) asparagine glycosylation is found at asparagine 585 and asparagine 586. Cysteine 592 and cysteine 643 are joined by a disulfide. Over residues 712 to 731 (TRQQHQQGEESQKMRGDYGK) the composition is skewed to basic and acidic residues. The segment at 712 to 751 (TRQQHQQGEESQKMRGDYGKLKALINSRKSRNRRNQLPES) is disordered.

The protein belongs to the semaphorin family. As to quaternary structure, interacts with PLXND1.

It localises to the secreted. In terms of biological role, binds to plexin family members and plays an important role in the regulation of developmental processes. Required for normal cardiovascular development during embryogenesis. Functions as attractant for growing axons, and thereby plays an important role in axon growth and axon guidance. The polypeptide is Semaphorin-3C (SEMA3C) (Bos taurus (Bovine)).